Reading from the N-terminus, the 339-residue chain is Photosystem II assembly lipoprotein Ycf48 (339 aa).

The N-terminal stretch at 1-22 (MVIVKSWQKIFTLLVVLLLCIG) is a signal peptide. The N-palmitoyl cysteine moiety is linked to residue C23. C23 carries the S-diacylglycerol cysteine lipid modification.

It belongs to the Ycf48 family. In terms of assembly, part of early PSII assembly complexes which includes D1 (psbA) and PsbI; not found in mature PSII. Binds to the lumenal side of PSII complexes. Interacts with YidC.

It is found in the cellular thylakoid membrane. Functionally, a factor required for optimal assembly of photosystem II (PSII), acting in the early stages of PSII assembly. Also plays a role in replacement of photodamaged D1 (psbA). Assists YidC in synthesis of chlorophyll-binding proteins. This Nostoc sp. (strain PCC 7120 / SAG 25.82 / UTEX 2576) protein is Photosystem II assembly lipoprotein Ycf48.